The following is a 628-amino-acid chain: Choline transporter-like protein 2 (628 aa).

Residues 1-31 (MSSEDLQDHHEIGNEVIKKKGVYTKKKCQDC) are Cytoplasmic-facing. A helical membrane pass occupies residues 32 to 52 (FFLILFLLFWAGMIVVAAFGV). Residues 53–204 (KNGKPDRIVK…EILTDLTNSW (152 aa)) lie on the Extracellular side of the membrane. 4 N-linked (GlcNAc...) asparagine glycosylation sites follow: Asn82, Asn118, Asn146, and Asn168. A helical transmembrane segment spans residues 205–225 (RYLIYGALIAMGLGLTWIFLL). Position 226 (Arg226) is a topological domain, cytoplasmic. Residues 227–247 (FFAGFITWLTVFAAYACLGLL) traverse the membrane as a helical segment. Residues 248–282 (TAQVYFQWQDSKDAYENTIPSQRLVMQEKNILALK) are Extracellular-facing. The helical transmembrane segment at 283 to 303 (VIFIILCVVCGIFALILLALF) threads the bilayer. Residues 304–319 (SRIRIAIRIIKECSRA) are Cytoplasmic-facing. The helical transmembrane segment at 320–340 (IGIMPSIFFFPIFIFLLLCGF) threads the bilayer. The Extracellular segment spans residues 341-381 (TVYWVYIGVYLATAGSPTYDDQYRFTGYEADSKLQKIQIYH). The helical transmembrane segment at 382-402 (FFGYLWTFAFILALNQTTIAG) threads the bilayer. The Cytoplasmic segment spans residues 403 to 432 (AISSWYWVQDKKDTPFFPVWSSFFRVIRYH). A helical membrane pass occupies residues 433-453 (LGSIALGSLILAIVQFIRWVL). Residues 454-530 (RFLEKKFKGK…RVAAVNLVSS (77 aa)) lie on the Extracellular side of the membrane. A helical membrane pass occupies residues 531-551 (FLMFLGRVFITAATVGISLYL). Over 552–559 (LKEHENLS) the chain is Cytoplasmic. The helical transmembrane segment at 560–580 (FYIIPVILIGFIAFAISTGFM) threads the bilayer. Residues 581–628 (SVYDMSIDTMLLCFCEDCERNDGSPERPYYMSKSLRKFVDGKGRSKCC) are Extracellular-facing.

This sequence belongs to the CTL (choline transporter-like) family.

The protein localises to the cell membrane. Its subcellular location is the mitochondrion outer membrane. It carries out the reaction choline(out) + n H(+)(in) = choline(in) + n H(+)(out). It catalyses the reaction ethanolamine(out) + n H(+)(in) = ethanolamine(in) + n H(+)(out). Choline/H+ antiporter, mainly in mitochodria. Also acts as a low-affinity ethanolamine/H+ antiporter, regulating the supply of extracellular ethanolamine (Etn) for the CDP-Etn pathway, redistribute intracellular Etn and balance the CDP-Cho and CDP-Etn arms of the Kennedy pathway. The protein is Choline transporter-like protein 2 (slc44a2) of Dictyostelium discoideum (Social amoeba).